Consider the following 151-residue polypeptide: MSTPDNRSVNFFSLFRRGQHYSKTWPLEKRLAPVFVENRVIKMTRYAIRFMPPIAVFTLCWQIALGGQLGPAVATALFALSLPMQGLWWLGKRSVTPLPPAILNWFYEVRGKLQESGQVLAPVEGKPDYQALADTLKRAFKQLDKTFLDDL.

2 helical membrane-spanning segments follow: residues 46–65 and 69–91; these read YAIRFMPPIAVFTLCWQIAL and LGPAVATALFALSLPMQGLWWLG.

It belongs to the UPF0208 family.

The protein resides in the cell inner membrane. The sequence is that of UPF0208 membrane protein YfbV from Shigella boydii serotype 18 (strain CDC 3083-94 / BS512).